Here is a 350-residue protein sequence, read N- to C-terminus: CMP-N-acetylneuraminate-beta-galactosamide-alpha-2,3-sialyltransferase 2 (350 aa).

The Cytoplasmic portion of the chain corresponds to 1 to 6 (MKCSLR). The chain crosses the membrane as a helical; Signal-anchor for type II membrane protein span at residues 7–27 (VWFLSMAFLLVFIMSLLFTYS). Residues 28–350 (HHSMATLPYL…ASKIEVYRGN (323 aa)) lie on the Lumenal side of the membrane. Disulfide bonds link Cys70-Cys75, Cys72-Cys149, and Cys152-Cys291. Residues Gln116, Asn157, and Asn180 each coordinate substrate. Asn211 carries an N-linked (GlcNAc...) asparagine glycan. Positions 240, 276, 280, 300, 309, and 326 each coordinate substrate.

This sequence belongs to the glycosyltransferase 29 family. As to quaternary structure, homodimer; disulfide-linked. Homodimer formation occurs in the endoplasmic reticulum. The soluble form derives from the membrane form by proteolytic processing. In terms of processing, N-glycosylated; necessary for proper exit from endoplasmic reticulum and trafficking to the Golgi apparatus.

It is found in the golgi apparatus. The protein resides in the golgi stack membrane. The protein localises to the secreted. It carries out the reaction a beta-D-galactosyl-(1-&gt;3)-N-acetyl-alpha-D-galactosaminyl derivative + CMP-N-acetyl-beta-neuraminate = an N-acetyl-alpha-neuraminyl-(2-&gt;3)-beta-D-galactosyl-(1-&gt;3)-N-acetyl-alpha-D-galactosaminyl derivative + CMP + H(+). The enzyme catalyses a ganglioside GM1 (d18:1(4E)) + CMP-N-acetyl-beta-neuraminate = a ganglioside GD1a (d18:1(4E)) + CMP + H(+). The catalysed reaction is ganglioside GM1 (d18:1(4E)/18:0) + CMP-N-acetyl-beta-neuraminate = ganglioside GD1a (18:1(4E)/18:0) + CMP + H(+). It catalyses the reaction a ganglioside GA1 + CMP-N-acetyl-beta-neuraminate = a ganglioside GM1b + CMP + H(+). It carries out the reaction a ganglioside GA1 (d18:1(4E)) + CMP-N-acetyl-beta-neuraminate = a ganglioside GM1b (d18:1(4E)) + CMP + H(+). The enzyme catalyses a globoside GalGb4Cer + CMP-N-acetyl-beta-neuraminate = a globoside MSGG + CMP + H(+). Its pathway is protein modification; protein glycosylation. It functions in the pathway glycolipid biosynthesis. Functionally, a beta-galactoside alpha2-3 sialyltransferase primarily involved in terminal sialylation of ganglio and globo series glycolipids. Catalyzes the transfer of sialic acid (N-acetyl-neuraminic acid; Neu5Ac) from the nucleotide sugar donor CMP-Neu5Ac onto acceptor Galbeta-(1-&gt;3)-GalNAc-terminated glycoconjugates through an alpha2-3 linkage. Sialylates GM1/GM1a, GA1/asialo-GM1 gangliosides to form GD1a and GM1b, respectively. Together with ST3GAL3, primarily responsible for biosynthesis of brain gangliosides that function as ligand for myelin-associated glycoprotein MAG on axons, regulating MAG expression and axonal myelin stability and regeneration. Responsible for the sialylation of the pluripotent stem cell- and cancer stem cell-associated antigen SSEA3, forming SSEA4. Sialylates with low efficiency asialofetuin, presumably onto O-glycosidically linked Galbeta-(1-&gt;3)-GalNAc-O-Ser. The protein is CMP-N-acetylneuraminate-beta-galactosamide-alpha-2,3-sialyltransferase 2 (St3gal2) of Rattus norvegicus (Rat).